A 419-amino-acid polypeptide reads, in one-letter code: Histidine--tRNA ligase (419 aa).

It belongs to the class-II aminoacyl-tRNA synthetase family. In terms of assembly, homodimer.

The protein localises to the cytoplasm. It carries out the reaction tRNA(His) + L-histidine + ATP = L-histidyl-tRNA(His) + AMP + diphosphate + H(+). The sequence is that of Histidine--tRNA ligase from Desulfatibacillum aliphaticivorans.